The following is a 316-amino-acid chain: N-acetylmuramic acid 6-phosphate etherase (316 aa).

Residues 68 to 231 (ITDRLRSGGR…STCAMVRLGK (164 aa)) form the SIS domain. The Proton donor role is filled by Glu96. Glu127 is an active-site residue.

Belongs to the GCKR-like family. MurNAc-6-P etherase subfamily. Homodimer.

The catalysed reaction is N-acetyl-D-muramate 6-phosphate + H2O = N-acetyl-D-glucosamine 6-phosphate + (R)-lactate. It functions in the pathway amino-sugar metabolism; N-acetylmuramate degradation. Specifically catalyzes the cleavage of the D-lactyl ether substituent of MurNAc 6-phosphate, producing GlcNAc 6-phosphate and D-lactate. In Prochlorococcus marinus (strain MIT 9303), this protein is N-acetylmuramic acid 6-phosphate etherase.